The following is a 722-amino-acid chain: Ataxin-7-like protein 2 (722 aa).

Disordered regions lie at residues 106 to 228 (LSKL…PPKT), 288 to 317 (NSRK…LPSS), 347 to 403 (SRAS…DCHY), and 531 to 600 (AITS…GCRG). Residues 181-191 (GKPPMAPPSKE) show a composition bias toward pro residues. One can recognise an SCA7 domain in the interval 230–297 (RKMARKECDL…NSRKGESPKE (68 aa)). A compositionally biased stretch (basic and acidic residues) spans 290–311 (RKGESPKEKSPGRKEQVLERPS). The span at 541–556 (PSPSFSKLPPSKASKS) shows a compositional bias: low complexity. Over residues 558–569 (KGKDGVEVEAPS) the composition is skewed to basic and acidic residues. Serine 575 bears the Phosphoserine mark.

The sequence is that of Ataxin-7-like protein 2 (ATXN7L2) from Homo sapiens (Human).